Reading from the N-terminus, the 306-residue chain is Tyrosine--tRNA ligase (306 aa).

2 residues coordinate L-tyrosine: Tyr-32 and Glu-36. Residues 37 to 45 (PSGKIHLGH) carry the 'HIGH' region motif. The segment at 151-158 (YPIMQVND) is tyrosine. Gln-173 contributes to the L-tyrosine binding site. The 'KMSKS' region signature appears at 204-208 (KMSSS). Ser-207 is a binding site for ATP. 2 interaction with t-RNA regions span residues 228–231 (KAYC) and 283–288 (HPMDLK).

The protein belongs to the class-I aminoacyl-tRNA synthetase family. TyrS type 3 subfamily. In terms of assembly, homodimer.

The protein resides in the cytoplasm. It catalyses the reaction tRNA(Tyr) + L-tyrosine + ATP = L-tyrosyl-tRNA(Tyr) + AMP + diphosphate + H(+). Catalyzes the attachment of tyrosine to tRNA(Tyr) in a two-step reaction: tyrosine is first activated by ATP to form Tyr-AMP and then transferred to the acceptor end of tRNA(Tyr). The protein is Tyrosine--tRNA ligase (tyrS) of Methanocaldococcus jannaschii (strain ATCC 43067 / DSM 2661 / JAL-1 / JCM 10045 / NBRC 100440) (Methanococcus jannaschii).